The primary structure comprises 544 residues: MFS-type transporter prx5 (544 aa).

The segment at 1 to 28 (MAVDTEKDSVQAGSPMETPGSPVDETTE) is disordered. The next 13 membrane-spanning stretches (helical) occupy residues 36–56 (WIVS…IPVV), 90–110 (LDHL…VASA), 116–136 (VIAG…AAFA), 148–168 (IGVV…PVTA), 178–198 (AWNF…LLFL), 221–241 (GAFL…WAGV), 249–269 (VVAP…WESF), 290–310 (FTAP…SSIL), 330–350 (VILS…LTCF), 361–381 (LTGS…VTPT), 387–407 (IAFI…SIAI), 418–438 (GVSG…ATSI), and 505–525 (AIFV…AACL).

This sequence belongs to the major facilitator superfamily.

The protein localises to the cell membrane. MFS-type transporter; part of the gene cluster that mediates the biosynthesis of PR-toxin, a bicyclic sesquiterpene belonging to the eremophilane class and acting as a mycotoxin. In Penicillium rubens (strain ATCC 28089 / DSM 1075 / NRRL 1951 / Wisconsin 54-1255) (Penicillium chrysogenum), this protein is MFS-type transporter prx5.